The sequence spans 224 residues: Urease accessory protein UreF (224 aa).

It belongs to the UreF family. UreD, UreF and UreG form a complex that acts as a GTP-hydrolysis-dependent molecular chaperone, activating the urease apoprotein by helping to assemble the nickel containing metallocenter of UreC. The UreE protein probably delivers the nickel.

It is found in the cytoplasm. In terms of biological role, required for maturation of urease via the functional incorporation of the urease nickel metallocenter. This is Urease accessory protein UreF from Nitrosococcus oceani (strain ATCC 19707 / BCRC 17464 / JCM 30415 / NCIMB 11848 / C-107).